The chain runs to 515 residues: Maturase K (515 aa).

It belongs to the intron maturase 2 family. MatK subfamily.

Its subcellular location is the plastid. The protein resides in the chloroplast. Its function is as follows. Usually encoded in the trnK tRNA gene intron. Probably assists in splicing its own and other chloroplast group II introns. This is Maturase K from Pinus yunnanensis (Yunnan pine).